A 744-amino-acid polypeptide reads, in one-letter code: Spalt-like protein sem-4 (744 aa).

The disordered stretch occupies residues 6 to 32 (AEMAAVSSRRKQSKPRRMSGEGDAMMS). Residues 13-22 (SRRKQSKPRR) are compositionally biased toward basic residues. 4 C2H2-type zinc fingers span residues 99–124 (SSCP…LDAH), 305–327 (NQCI…YRTH), 333–355 (FKCK…MGVH), and 411–433 (QQCP…ITEH). The segment covering 487-497 (KNDSSPNTDTS) has biased composition (polar residues). Disordered stretches follow at residues 487 to 530 (KNDS…RQDI) and 542 to 562 (KLEE…PKNE). Basic and acidic residues predominate over residues 499-509 (VEEKITRDDPP). The span at 513-525 (SLSPSNSSDSSSS) shows a compositional bias: low complexity. The span at 551–561 (QQVSTTPNPKN) shows a compositional bias: polar residues. 3 consecutive C2H2-type zinc fingers follow at residues 589-611 (HQCG…MRTH), 617-639 (FKCD…MGTH), and 701-723 (TVCS…LKEH). The interval 725 to 744 (NNGSSAAPTPLASAATPPPS) is disordered. Over residues 728-744 (SSAAPTPLASAATPPPS) the composition is skewed to low complexity.

Belongs to the sal C2H2-type zinc-finger protein family.

Its subcellular location is the nucleus. Transcription factor, involved in positive and negative modulation of transcription. Binds to multiple DNA sequence motifs in the regulatory elements of target genes, including homeobox selector egl-5 and LIM homeobox mec-3. Involved in cell-fate regulation in multiple lineages, including neuronal, mesodermal and vulval. Required to regulate the fate of PLM touch receptor neurons, acting via negative modulation of transcription of egl-5 and mec-3. May modulate gene expression by interacting with different transcription factors during neuronal and mesodermal cell development. Promotes the proliferative sex myoblast (SM) fate, in a cell autonomous manner, acting via the SoxC transcription factor sem-2. Involved in vulval cell-fate determination, acting by regulating expression of homeobox protein lin-39, and may link lin-39 to incoming signaling pathways. Plays a role in detoxification of reactive oxygen species (ROS), by regulating expression of transcription factor skn-1 and the phase II detoxification genes. The chain is Spalt-like protein sem-4 from Caenorhabditis elegans.